The primary structure comprises 378 residues: Succinyl-diaminopimelate desuccinylase (378 aa).

His67 is a binding site for Zn(2+). Asp69 is a catalytic residue. Asp100 contributes to the Zn(2+) binding site. The active-site Proton acceptor is Glu134. Zn(2+)-binding residues include Glu135, Glu163, and His349.

The protein belongs to the peptidase M20A family. DapE subfamily. As to quaternary structure, homodimer. The cofactor is Zn(2+). It depends on Co(2+) as a cofactor.

It carries out the reaction N-succinyl-(2S,6S)-2,6-diaminopimelate + H2O = (2S,6S)-2,6-diaminopimelate + succinate. Its pathway is amino-acid biosynthesis; L-lysine biosynthesis via DAP pathway; LL-2,6-diaminopimelate from (S)-tetrahydrodipicolinate (succinylase route): step 3/3. Its function is as follows. Catalyzes the hydrolysis of N-succinyl-L,L-diaminopimelic acid (SDAP), forming succinate and LL-2,6-diaminopimelate (DAP), an intermediate involved in the bacterial biosynthesis of lysine and meso-diaminopimelic acid, an essential component of bacterial cell walls. This chain is Succinyl-diaminopimelate desuccinylase, found in Nitrosomonas eutropha (strain DSM 101675 / C91 / Nm57).